A 258-amino-acid chain; its full sequence is Thiazole synthase (258 aa).

The Schiff-base intermediate with DXP role is filled by Lys-100. 1-deoxy-D-xylulose 5-phosphate is bound by residues Gly-161, 187-188 (AG), and 209-210 (NT).

Belongs to the ThiG family. In terms of assembly, homotetramer. Forms heterodimers with either ThiH or ThiS.

It localises to the cytoplasm. It carries out the reaction [ThiS sulfur-carrier protein]-C-terminal-Gly-aminoethanethioate + 2-iminoacetate + 1-deoxy-D-xylulose 5-phosphate = [ThiS sulfur-carrier protein]-C-terminal Gly-Gly + 2-[(2R,5Z)-2-carboxy-4-methylthiazol-5(2H)-ylidene]ethyl phosphate + 2 H2O + H(+). Its pathway is cofactor biosynthesis; thiamine diphosphate biosynthesis. Its function is as follows. Catalyzes the rearrangement of 1-deoxy-D-xylulose 5-phosphate (DXP) to produce the thiazole phosphate moiety of thiamine. Sulfur is provided by the thiocarboxylate moiety of the carrier protein ThiS. In vitro, sulfur can be provided by H(2)S. This chain is Thiazole synthase, found in Campylobacter jejuni (strain RM1221).